The following is a 240-amino-acid chain: Orotidine 5'-phosphate decarboxylase (240 aa).

Substrate-binding positions include Asp-10, Lys-33, 60–69 (DLKLHDIPNT), Thr-123, Arg-185, Gln-194, Gly-214, and Arg-215. Lys-62 (proton donor) is an active-site residue.

It belongs to the OMP decarboxylase family. Type 1 subfamily. Homodimer.

The enzyme catalyses orotidine 5'-phosphate + H(+) = UMP + CO2. It functions in the pathway pyrimidine metabolism; UMP biosynthesis via de novo pathway; UMP from orotate: step 2/2. Catalyzes the decarboxylation of orotidine 5'-monophosphate (OMP) to uridine 5'-monophosphate (UMP). The chain is Orotidine 5'-phosphate decarboxylase from Lactobacillus delbrueckii subsp. bulgaricus (strain ATCC 11842 / DSM 20081 / BCRC 10696 / JCM 1002 / NBRC 13953 / NCIMB 11778 / NCTC 12712 / WDCM 00102 / Lb 14).